The primary structure comprises 471 residues: Putative multidrug resistance protein MdtD (471 aa).

Transmembrane regions (helical) follow at residues 12–32 (LWIVAFGFFMQALDTTIVNTA), 49–69 (MVIVSYVLTVAVMLPASGWLA), 77–97 (IFFTAIVLFTLGSLFCAQSST), 106–126 (VLQGIGGAMMVPVGRLTVMKI), 138–158 (FVTLPGQVGPLLGPALGGLLV), 165–185 (WIFLINLPVGIAGAAATLWLM), 197–217 (FSGFLLLAFGMAALTIALDGY), 225–245 (AGLGALVAGGSAATLLYLWHA), 263–285 (FSLGLFGSLCGRIGSGMLPFMTP), 290–312 (IGLGFSPFHAGLMMMPMVLGSMG), 342–362 (LLFMGVALAGWYWLLPVVMLF), 396–416 (MVMQLSMSLGVSIAGLLLGAF), and 431–451 (IFFWTYLCMALIIALPALVFA).

The protein belongs to the major facilitator superfamily. TCR/Tet family.

The protein localises to the cell inner membrane. This is Putative multidrug resistance protein MdtD from Cronobacter sakazakii (strain ATCC BAA-894) (Enterobacter sakazakii).